A 603-amino-acid polypeptide reads, in one-letter code: Protein Spindly (603 aa).

M1 is subject to N-acetylmethionine. Residues 1 to 442 (MESDVIADLR…LKLKYEPEEK (442 aa)) are a coiled coil. A phosphoserine mark is found at S513 and S553. The interval 542–577 (ALSERSRNTPNSPRLAAESRLQREVKQGKETASKLE) is disordered. Residues 561–577 (RLQREVKQGKETASKLE) are compositionally biased toward basic and acidic residues.

The protein belongs to the Spindly family. Interacts with KNTC1 and ZW10. These interactions appear weak and may be transient or indirect. Interacts with dynein intermediate chain and dynactin (DCTN1). Interacts with the catalytically active form of USP45. Monoubiquitinated with'Lys-48' linkage. Deubiquitinated by USP45.

Its subcellular location is the cytoplasm. It is found in the cytoskeleton. It localises to the microtubule organizing center. The protein localises to the centrosome. The protein resides in the chromosome. Its subcellular location is the centromere. It is found in the kinetochore. It localises to the nucleus. The protein localises to the spindle pole. Functionally, required for the localization of dynein and dynactin to the mitotic kintochore. Dynein is believed to control the initial lateral interaction between the kinetochore and spindle microtubules and to facilitate the subsequent formation of end-on kinetochore-microtubule attachments mediated by the NDC80 complex. Also required for correct spindle orientation. Does not appear to be required for the removal of spindle assembly checkpoint (SAC) proteins from the kinetochore upon bipolar spindle attachment. Acts as an adapter protein linking the dynein motor complex to various cargos and converts dynein from a non-processive to a highly processive motor in the presence of dynactin. Facilitates the interaction between dynein and dynactin and activates dynein processivity (the ability to move along a microtubule for a long distance without falling off the track). Plays a role in cell migration. This chain is Protein Spindly, found in Bos taurus (Bovine).